Here is a 101-residue protein sequence, read N- to C-terminus: Phosphoribosyl-ATP pyrophosphatase (101 aa).

It belongs to the PRA-PH family.

It is found in the cytoplasm. It carries out the reaction 1-(5-phospho-beta-D-ribosyl)-ATP + H2O = 1-(5-phospho-beta-D-ribosyl)-5'-AMP + diphosphate + H(+). The protein operates within amino-acid biosynthesis; L-histidine biosynthesis; L-histidine from 5-phospho-alpha-D-ribose 1-diphosphate: step 2/9. This Natronomonas pharaonis (strain ATCC 35678 / DSM 2160 / CIP 103997 / JCM 8858 / NBRC 14720 / NCIMB 2260 / Gabara) (Halobacterium pharaonis) protein is Phosphoribosyl-ATP pyrophosphatase.